The primary structure comprises 387 residues: uncharacterized protein (387 aa).

The protein localises to the mitochondrion. This is an uncharacterized protein from Paramecium tetraurelia.